Here is a 281-residue protein sequence, read N- to C-terminus: Apulose-4-phosphate transketolase subunit A (281 aa).

The protein belongs to the transketolase family. In terms of assembly, probable heterodimer composed of AptA and AptB. The cofactor is thiamine diphosphate.

The enzyme catalyses apulose 4-phosphate + D-glyceraldehyde 3-phosphate = D-xylulose 5-phosphate + dihydroxyacetone phosphate. It participates in carbohydrate metabolism. Functionally, involved in catabolism of D-apiose. Catalyzes the transfer of the glycolaldehyde group from apulose-4-phosphate to D-glyceraldehyde 3-phosphate, generating dihydroxyacetone phosphate and D-xylulose-5-phosphate. The protein is Apulose-4-phosphate transketolase subunit A of Phocaeicola vulgatus (strain ATCC 8482 / DSM 1447 / JCM 5826 / CCUG 4940 / NBRC 14291 / NCTC 11154) (Bacteroides vulgatus).